A 326-amino-acid chain; its full sequence is tRNA uridine(34) hydroxylase (326 aa).

A Rhodanese domain is found at 123-217 (ADPEVFVVDT…YLEEVPEEES (95 aa)). The active-site Cysteine persulfide intermediate is the cysteine 177. Residues 293 to 326 (AVRGEQHVGGESAKQRQQRRAEKLAKKDVQRKQA) form a disordered region. Basic and acidic residues predominate over residues 311 to 326 (RRAEKLAKKDVQRKQA).

This sequence belongs to the TrhO family.

It carries out the reaction uridine(34) in tRNA + AH2 + O2 = 5-hydroxyuridine(34) in tRNA + A + H2O. In terms of biological role, catalyzes oxygen-dependent 5-hydroxyuridine (ho5U) modification at position 34 in tRNAs. The polypeptide is tRNA uridine(34) hydroxylase (Vibrio campbellii (strain ATCC BAA-1116)).